The following is a 59-amino-acid chain: Alpha-like toxin CsEv5 (59 aa).

Residues 1–59 form the LCN-type CS-alpha/beta domain; the sequence is KDGYPVDSKGCKLSCVANNYCDNQCKMKKASGGHCYAMSCYCEGLPENAKVSDSATNIC. 4 disulfide bridges follow: Cys11/Cys59, Cys15/Cys35, Cys21/Cys40, and Cys25/Cys42.

This sequence belongs to the long (4 C-C) scorpion toxin superfamily. Sodium channel inhibitor family. Expressed by the venom gland.

Its subcellular location is the secreted. Its function is as follows. Binds voltage-independently sodium channels (Nav) and inhibits the inactivation of the activated channels, thereby blocking neuronal transmission. Is highly toxic to insects and barely toxic to mammals. As it does not compete with the classical alpha-toxin AaH2, this toxin is considered as an alpha-like toxin. In Centruroides sculpturatus (Arizona bark scorpion), this protein is Alpha-like toxin CsEv5.